A 371-amino-acid polypeptide reads, in one-letter code: 4-hydroxy-3-methylbut-2-en-1-yl diphosphate synthase (flavodoxin) (371 aa).

Residues Cys270, Cys273, Cys305, and Glu312 each contribute to the [4Fe-4S] cluster site.

This sequence belongs to the IspG family. [4Fe-4S] cluster serves as cofactor.

It carries out the reaction (2E)-4-hydroxy-3-methylbut-2-enyl diphosphate + oxidized [flavodoxin] + H2O + 2 H(+) = 2-C-methyl-D-erythritol 2,4-cyclic diphosphate + reduced [flavodoxin]. It participates in isoprenoid biosynthesis; isopentenyl diphosphate biosynthesis via DXP pathway; isopentenyl diphosphate from 1-deoxy-D-xylulose 5-phosphate: step 5/6. Converts 2C-methyl-D-erythritol 2,4-cyclodiphosphate (ME-2,4cPP) into 1-hydroxy-2-methyl-2-(E)-butenyl 4-diphosphate. This Shewanella sp. (strain ANA-3) protein is 4-hydroxy-3-methylbut-2-en-1-yl diphosphate synthase (flavodoxin).